Here is a 402-residue protein sequence, read N- to C-terminus: Arginine deiminase (402 aa).

Catalysis depends on Cys-392, which acts as the Amidino-cysteine intermediate.

This sequence belongs to the arginine deiminase family.

The protein localises to the cytoplasm. The enzyme catalyses L-arginine + H2O = L-citrulline + NH4(+). It participates in amino-acid degradation; L-arginine degradation via ADI pathway; carbamoyl phosphate from L-arginine: step 1/2. The polypeptide is Arginine deiminase (arcA) (Mycobacterium bovis (strain ATCC BAA-935 / AF2122/97)).